The sequence spans 503 residues: Geissoschizine oxidase (503 aa).

A helical membrane pass occupies residues 7–27; sequence FSSPSFFFLLPFLFLLIKPLI. Cys-441 lines the heme pocket.

Belongs to the cytochrome P450 family. Heme serves as cofactor.

The protein resides in the membrane. It carries out the reaction (19E)-geissoschizine + reduced [NADPH--hemoprotein reductase] + O2 = akuammicine + formate + oxidized [NADPH--hemoprotein reductase] + H2O + H(+). The catalysed reaction is (19E)-geissoschizine + reduced [NADPH--hemoprotein reductase] + O2 = 3,17-didehydrostemmadenine + oxidized [NADPH--hemoprotein reductase] + 2 H2O. It catalyses the reaction 3,17-didehydrostemmadenine = 17-dehydropreakuammicine. The protein operates within alkaloid biosynthesis. In terms of biological role, monooxygenase involved in the biosynthesis of curare monoterpene indole alkaloids (MIAs), natural products such as diaboline, a pharmacologically active compound used to regulate blood pressure. Curare alkaloids act as animal glycine receptor antagonists. Catalyzes the conversion of geissoschizine to dehydropreakuammicine by cyclization, which is spontaneously converted into akuammicine by aromatization. The chain is Geissoschizine oxidase from Strychnos sp.